Here is a 136-residue protein sequence, read N- to C-terminus: 6,7-dimethyl-8-ribityllumazine synthase (136 aa).

Residues phenylalanine 11, 43–45, and 67–69 contribute to the 5-amino-6-(D-ribitylamino)uracil site; these read VYD and CVI. A (2S)-2-hydroxy-3-oxobutyl phosphate-binding site is contributed by 72 to 73; the sequence is DT. The active-site Proton donor is histidine 75. Leucine 100 lines the 5-amino-6-(D-ribitylamino)uracil pocket. Arginine 115 is a binding site for (2S)-2-hydroxy-3-oxobutyl phosphate.

The protein belongs to the DMRL synthase family. Forms an icosahedral capsid composed of 60 subunits, arranged as a dodecamer of pentamers.

It catalyses the reaction (2S)-2-hydroxy-3-oxobutyl phosphate + 5-amino-6-(D-ribitylamino)uracil = 6,7-dimethyl-8-(1-D-ribityl)lumazine + phosphate + 2 H2O + H(+). It participates in cofactor biosynthesis; riboflavin biosynthesis; riboflavin from 2-hydroxy-3-oxobutyl phosphate and 5-amino-6-(D-ribitylamino)uracil: step 1/2. Its function is as follows. Catalyzes the formation of 6,7-dimethyl-8-ribityllumazine by condensation of 5-amino-6-(D-ribitylamino)uracil with 3,4-dihydroxy-2-butanone 4-phosphate. This is the penultimate step in the biosynthesis of riboflavin. This Methanococcus aeolicus (strain ATCC BAA-1280 / DSM 17508 / OCM 812 / Nankai-3) protein is 6,7-dimethyl-8-ribityllumazine synthase.